Consider the following 140-residue polypeptide: Small ribosomal subunit protein uS12 (140 aa).

The disordered stretch occupies residues 33–55 (KEQTNVSSPQKRGVCTRVGTMTP).

The protein belongs to the universal ribosomal protein uS12 family. Part of the 30S ribosomal subunit. Contacts proteins S8 and S17. May interact with IF1 in the 30S initiation complex.

In terms of biological role, with S4 and S5 plays an important role in translational accuracy. Interacts with and stabilizes bases of the 16S rRNA that are involved in tRNA selection in the A site and with the mRNA backbone. Located at the interface of the 30S and 50S subunits, it traverses the body of the 30S subunit contacting proteins on the other side and probably holding the rRNA structure together. The combined cluster of proteins S8, S12 and S17 appears to hold together the shoulder and platform of the 30S subunit. This Geobacillus kaustophilus (strain HTA426) protein is Small ribosomal subunit protein uS12.